A 340-amino-acid chain; its full sequence is 4-amino-5-hydroxymethyl-2-methylpyrimidine phosphate synthase THI11 (340 aa).

At lysine 62 the chain carries N6-(pyridoxal phosphate)lysine. Residue histidine 66 is part of the active site. A pyridoxal 5'-phosphate-binding site is contributed by 115–118 (GEFG). The short motif at 195 to 199 (CCCFC) is the CCCFC; essential for catalytic activity, may be the site of iron coordination element.

Belongs to the NMT1/THI5 family. As to quaternary structure, homodimer. It depends on Fe cation as a cofactor.

It catalyses the reaction N(6)-(pyridoxal phosphate)-L-lysyl-[4-amino-5-hydroxymethyl-2-methylpyrimidine phosphate synthase] + L-histidyl-[4-amino-5-hydroxymethyl-2-methylpyrimidine phosphate synthase] + 2 Fe(3+) + 4 H2O = L-lysyl-[4-amino-5-hydroxymethyl-2-methylpyrimidine phosphate synthase] + (2S)-2-amino-5-hydroxy-4-oxopentanoyl-[4-amino-5-hydroxymethyl-2-methylpyrimidine phosphate synthase] + 4-amino-2-methyl-5-(phosphooxymethyl)pyrimidine + 3-oxopropanoate + 2 Fe(2+) + 2 H(+). The protein operates within cofactor biosynthesis; thiamine diphosphate biosynthesis. Functionally, responsible for the formation of the pyrimidine heterocycle in the thiamine biosynthesis pathway. Catalyzes the formation of hydroxymethylpyrimidine phosphate (HMP-P) from histidine and pyridoxal phosphate (PLP). The protein uses PLP and the active site histidine to form HMP-P, generating an inactive enzyme. The enzyme can only undergo a single turnover, which suggests it is a suicide enzyme. This is 4-amino-5-hydroxymethyl-2-methylpyrimidine phosphate synthase THI11 from Saccharomyces cerevisiae (strain ATCC 204508 / S288c) (Baker's yeast).